A 331-amino-acid polypeptide reads, in one-letter code: 6-phosphogluconolactonase (331 aa).

Lysine 287 is modified (N6-acetyllysine).

Belongs to the cycloisomerase 2 family.

It carries out the reaction 6-phospho-D-glucono-1,5-lactone + H2O = 6-phospho-D-gluconate + H(+). The protein operates within carbohydrate degradation; pentose phosphate pathway; D-ribulose 5-phosphate from D-glucose 6-phosphate (oxidative stage): step 2/3. In terms of biological role, catalyzes the hydrolysis of 6-phosphogluconolactone to 6-phosphogluconate. The protein is 6-phosphogluconolactonase of Escherichia coli O8 (strain IAI1).